A 220-amino-acid polypeptide reads, in one-letter code: Cysteine-rich venom protein (220 aa).

The SCP domain occupies 20 to 147 (DLHNSLRRSV…AYKYFYVCQY (128 aa)). Intrachain disulfides connect Cys56-Cys134, Cys73-Cys148, Cys129-Cys145, Cys167-Cys174, Cys170-Cys179, Cys183-Cys215, Cys192-Cys209, and Cys200-Cys213. Residues 183-215 (CTREDEFINCNDLVKQGCQTDYLKSNCAASCFC) enclose the ShKT domain.

In terms of tissue distribution, expressed by the venom gland.

It is found in the secreted. In terms of biological role, blocks contraction of smooth muscle elicited by high potassium-induced depolarization, but does not block caffeine-stimulated contraction. May target voltage-gated calcium channels in smooth muscle. The chain is Cysteine-rich venom protein from Echis coloratus (Carpet viper).